The following is an 896-amino-acid chain: Zinc finger protein 574 (896 aa).

2 C2H2-type zinc fingers span residues 16–38 (YVCS…QNSH) and 76–98 (YQCL…QELH). Serine 113 bears the Phosphoserine mark. A C2H2-type 3 zinc finger spans residues 126-148 (YECVDCKALFASQELWLNHRQTH). The residue at position 164 (serine 164) is a Phosphoserine. The segment at 214-236 (YKCSECSQLFQLPADFLEHQATH) adopts a C2H2-type 4 zinc-finger fold. A disordered region spans residues 239–301 (APVPESQEPA…RARRNNSGEA (63 aa)). Residues 247-257 (PALQQEVQASS) show a composition bias toward polar residues. Positions 274 to 287 (HSYELRNGEAIGRD) are enriched in basic and acidic residues. At serine 298 the chain carries Phosphoserine. 4 consecutive C2H2-type zinc fingers follow at residues 309 to 331 (LFCS…LRSH), 336 to 358 (FKCP…LGDH), 364 to 386 (FLCV…RRAH), and 392 to 413 (HSCP…RRTH). The interval 434-460 (FPEPAPAETGEPEAPEPPVSEETSAGP) is disordered. The C2H2-type 9 zinc finger occupies 466–489 (YRCLLCSREFGKALQLTRHQRFVH). The C2H2-type 10; degenerate zinc finger occupies 495–517 (HKCSICGKMFKKKSHVRNHLRTH). 4 consecutive C2H2-type zinc fingers follow at residues 523–545 (FPCP…RLTH), 551–573 (YRCG…RLVH), 579–601 (YRCQ…RYHH), and 607–630 (YKCR…LVVH). A C2H2-type 15; degenerate zinc finger spans residues 636 to 659 (HRCPSCGAAFPSSLRLREHRCAAA). The C2H2-type 16 zinc finger occupies 667-689 (FECGTCGKKVGSAARLQAHEAAH). The tract at residues 687–733 (AAHAAAGPGEVLAKEPPAPRAPRATRAPVASPAALGSTATASPAAPA) is disordered. A compositionally biased stretch (low complexity) spans 707–732 (APRATRAPVASPAALGSTATASPAAP). Phosphoserine is present on serine 717. Threonine 724 carries the phosphothreonine modification. The residue at position 728 (serine 728) is a Phosphoserine. 4 C2H2-type zinc fingers span residues 738–760 (LECS…RRIH), 766–788 (YPCP…RRLH), 794–816 (FACE…RRIH), and 822–844 (YSCP…RKTH). Position 832 is an asymmetric dimethylarginine (arginine 832).

This sequence belongs to the krueppel C2H2-type zinc-finger protein family.

It is found in the nucleus. Its function is as follows. May be involved in transcriptional regulation. This chain is Zinc finger protein 574 (ZNF574), found in Homo sapiens (Human).